Consider the following 313-residue polypeptide: DDRGK domain-containing protein 1 (313 aa).

A helical transmembrane segment spans residues 1–28 (MVSPVVYLVVAALLVGLILFLTRGRGRA). The mediates interaction with CDK5RAP3 stretch occupies residues 1–113 (MVSPVVYLVV…IEKPVETHLS (113 aa)). Residues 29 to 313 (AAAAQEPLHN…GRETPAQAPA (285 aa)) lie on the Cytoplasmic side of the membrane. The disordered stretch occupies residues 40-88 (EVPAAAGRVARPQPLEPEEQRAAGRPRRRRDLGSRLQAQRRAQRVAWAD). 2 positions are modified to phosphoserine: S73 and S113. Over residues 73 to 87 (SRLQAQRRAQRVAWA) the composition is skewed to low complexity. The segment at 117–215 (GAKKLRKLEE…MTEEQSHSFL (99 aa)) is mediates interaction with TRIP4. The tract at residues 130–185 (RKAQREAEEAEREERKRLESQREAEWKKEEERLRLEEEQKEEEERKAQEEQAQREH) is disordered. Positions 194–208 (TFVVVEEGVGETMTE) match the UFM1-interacting motif (UFIM) motif. The segment at 215–313 (LAEFINYIKQ…GRETPAQAPA (99 aa)) is mediates interaction with UFL1. A PCI domain is found at 228–272 (VLLEDLASQVGLRTQDTINRIQDLLAEGTLTGVIDDRGKFIYITP). K266 is covalently cross-linked (Glycyl lysine isopeptide (Lys-Gly) (interchain with G-Cter in UFM1)).

Belongs to the DDRGK1 family. Component of the UFM1 ribosome E3 ligase (UREL) complex, composed of UFL1, DDRGK1 and CDK5RAP3. Interacts with (unphosphorylated) ERN1/IRE1-alpha; interaction is dependent on UFM1 and takes place in response to endoplasmic reticulum stress, regulating ERN1/IRE1-alpha stability. Interacts with NFKBIA. Interacts with SOX9. Ubiquitinated. Ubiquitination probably triggers proteasomal degradation and is negatively regulated by UFL1, the enzyme involved in the ufmylation of DDRGK1. In terms of processing, ufmylated; conjugated to ubiquitin-like protein UFM1, probably at Lys-266 by UFL1. The relevance of ufmylation is however unclear: as DDRGK1 acts as a substrate adapter for ufmylation, it is uncertain whether ufmylation is a collateral effect of the ufmylation process or whether it is required to regulate its activity.

It localises to the endoplasmic reticulum membrane. Its function is as follows. Component of the UFM1 ribosome E3 ligase (UREL) complex, a multiprotein complex that catalyzes ufmylation of endoplasmic reticulum-docked proteins. The UREL complex plays a key role in ribosome recycling by mediating mono-ufmylation of the RPL26/uL24 subunit of the 60S ribosome following ribosome dissociation: ufmylation weakens the junction between post-termination 60S subunits and SEC61 translocons, promoting release and recycling of the large ribosomal subunit from the endoplasmic reticulum membrane. Ufmylation of RPL26/uL24 and subsequent 60S ribosome recycling either take place after normal termination of translation or after ribosome stalling during cotranslational translocation at the endoplasmic reticulum. Within the UREL complex, DDRGK1 tethers the complex to the endoplasmic reticulum membrane to restrict its activity to endoplasmic reticulum-docked ribosomes and acts as an ufmylation 'reader': following RPL26/uL24 ufmylation, DDRGK1 specifically binds to ufmylated RPL26/uL24 via its UFIM motif, resulting in stable association between the 60S ribosome and the UREL complex, followed by dissociation of the 60S ribosome subunit from the endoplasmic reticulum membrane. The UREL complex is also involved in reticulophagy in response to endoplasmic reticulum stress by promoting ufmylation of proteins such as CYB5R3 and RPN1, thereby promoting lysosomal degradation of ufmylated proteins. Ufmylation-dependent reticulophagy inhibits the unfolded protein response (UPR) by regulating ERN1/IRE1-alpha stability. Acts as a regulator of immunity by promoting differentiation of B-cells into plasma cells: acts by promoting expansion of the endoplasmic reticulum and regulating the unfolded protein response (UPR). May also be required for TRIP4 ufmylation. May play a role in NF-kappa-B-mediated transcription through regulation of the phosphorylation and the degradation of NFKBIA, the inhibitor of NF-kappa-B. Plays a role in cartilage development through SOX9, inhibiting the ubiquitin-mediated proteasomal degradation of this transcriptional regulator. Required for stabilization and ufmylation of ATG9A. The chain is DDRGK domain-containing protein 1 from Bos taurus (Bovine).